A 172-amino-acid chain; its full sequence is Early E3 18.5 kDa glycoprotein (172 aa).

The N-terminal stretch at Met-1–Ala-19 is a signal peptide. The Lumenal segment spans residues Asn-20 to Ile-136. Asn-36 is a glycosylation site (N-linked (GlcNAc...) asparagine; by host). Disulfide bonds link Cys-37/Cys-55 and Cys-49/Cys-111. N-linked (GlcNAc...) asparagine; by host glycosylation is found at Asn-68, Asn-72, and Asn-102. Residues Ala-137 to Ile-157 form a helical membrane-spanning segment. Residues Val-158–Pro-172 lie on the Cytoplasmic side of the membrane. Positions Lys-168–Pro-172 match the Di-lysine motif motif.

Belongs to the adenoviridae E19 family. Both disulfide bonds are absolutely critical for the interaction with MHC antigens. Post-translationally, N-glycosylated; high-mannose.

It localises to the host endoplasmic reticulum membrane. Binds and retains class I heavy chains in the endoplasmic reticulum during the early period of virus infection, thereby impairing their transport to the cell surface. Also delays the expression of class I alleles that it cannot affect by direct retention. Binds transporters associated with antigen processing (TAP) and acts as a tapasin inhibitor, preventing class I/TAP association. In consequence, infected cells are masked for immune recognition by cytotoxic T-lymphocytes. This Human adenovirus B serotype 3 (HAdV-3) protein is Early E3 18.5 kDa glycoprotein.